The sequence spans 358 residues: Heme A synthase (358 aa).

8 consecutive transmembrane segments (helical) span residues 25–45 (LVRY…MVGG), 111–131 (LLAR…WLTG), 141–161 (MLGL…MVAS), 176–196 (IHLT…RGLV), 210–230 (FAGW…LVAG), 269–289 (VQFV…LHAV), 304–324 (TIVL…TLLM), and 326–346 (APLH…AFAV). H273 is a heme binding site. H334 contributes to the heme binding site.

This sequence belongs to the COX15/CtaA family. Type 2 subfamily. Interacts with CtaB. It depends on heme b as a cofactor.

The protein localises to the cell membrane. It carries out the reaction Fe(II)-heme o + 2 A + H2O = Fe(II)-heme a + 2 AH2. It participates in porphyrin-containing compound metabolism; heme A biosynthesis; heme A from heme O: step 1/1. Functionally, catalyzes the conversion of heme O to heme A by two successive hydroxylations of the methyl group at C8. The first hydroxylation forms heme I, the second hydroxylation results in an unstable dihydroxymethyl group, which spontaneously dehydrates, resulting in the formyl group of heme A. This Brucella abortus (strain S19) protein is Heme A synthase.